Consider the following 205-residue polypeptide: Small ribosomal subunit protein uS4 (205 aa).

The disordered stretch occupies residues 19-45 (IWGRPKSPVNRREYGPGQHGQRRKGKL). Residues 94–157 (RRLDAVVYRA…KQLAFVLEAS (64 aa)) form the S4 RNA-binding domain.

Part of the 30S ribosomal subunit. Contacts protein S5. The interaction surface between S4 and S5 is involved in control of translational fidelity. In terms of processing, may be methylated on an undetermined residue.

Its function is as follows. One of the primary rRNA binding proteins, it binds directly to 16S rRNA where it nucleates assembly of the body of the 30S subunit. Functionally, with S5 and S12 plays an important role in translational accuracy. The protein is Small ribosomal subunit protein uS4 of Rhodopseudomonas palustris (strain ATCC BAA-98 / CGA009).